The sequence spans 149 residues: 3-dehydroquinate dehydratase (149 aa).

Tyr21 functions as the Proton acceptor in the catalytic mechanism. Substrate-binding residues include Asn73, His79, and Asp86. The active-site Proton donor is the His99. Substrate contacts are provided by residues 100-101 and Arg110; that span reads LT.

The protein belongs to the type-II 3-dehydroquinase family. Homododecamer.

It catalyses the reaction 3-dehydroquinate = 3-dehydroshikimate + H2O. It functions in the pathway metabolic intermediate biosynthesis; chorismate biosynthesis; chorismate from D-erythrose 4-phosphate and phosphoenolpyruvate: step 3/7. In terms of biological role, catalyzes a trans-dehydration via an enolate intermediate. The polypeptide is 3-dehydroquinate dehydratase (Thermus thermophilus (strain ATCC BAA-163 / DSM 7039 / HB27)).